The chain runs to 346 residues: uncharacterized protein (346 aa).

A signal peptide spans methionine 1–glycine 28.

This is an uncharacterized protein from Methanocaldococcus jannaschii (strain ATCC 43067 / DSM 2661 / JAL-1 / JCM 10045 / NBRC 100440) (Methanococcus jannaschii).